Consider the following 891-residue polypeptide: 26S proteasome non-ATPase regulatory subunit 2 homolog A (891 aa).

The segment at 1 to 44 (MAPTQDPNSVGGGAKKDEATLKVPSKDPKKKDEKKDEDLSEEDL) is disordered. The Nuclear localization signal signature appears at 14–21 (AKKDEATL). Residues 14-37 (AKKDEATLKVPSKDPKKKDEKKDE) show a composition bias toward basic and acidic residues. K218 is covalently cross-linked (Glycyl lysine isopeptide (Lys-Gly) (interchain with G-Cter in ubiquitin)). An O-acetylthreonine modification is found at T219. 7 PC repeats span residues 414–447 (SAAA…PIIA), 448–484 (GALL…SVRI), 485–519 (GAIM…PLDV), 522–556 (FASL…AELG), 565–594 (LGLG…KIRK), 674–705 (LALG…EVAM), and 724–739 (AGML…KDMS).

This sequence belongs to the proteasome subunit S2 family. As to quaternary structure, component of the 19S regulatory particle (RP/PA700) base subcomplex of the 26S proteasome. The 26S proteasome is composed of a core protease (CP), known as the 20S proteasome, capped at one or both ends by the 19S regulatory particle (RP/PA700). The RP/PA700 complex is composed of at least 17 different subunits in two subcomplexes, the base and the lid, which form the portions proximal and distal to the 20S proteolytic core, respectively. Interacts with JMJ27. Expressed in stems, leaves, buds, flowers, siliques and developing seeds.

Its subcellular location is the nucleus. The protein resides in the cytoplasm. Acts as a regulatory subunit of the 26 proteasome which is involved in the ATP-dependent degradation of ubiquitinated proteins. Required during embryogenesis. Required for optimal plant growth and stress responses. Required for innate immunity. Prevents JMJ27 accumulation in non-drought conditions. This is 26S proteasome non-ATPase regulatory subunit 2 homolog A from Arabidopsis thaliana (Mouse-ear cress).